Here is a 535-residue protein sequence, read N- to C-terminus: Sucrose transport protein SUT5 (535 aa).

Over 1–53 (MEEGRRGDREAKSAAGWTALSTTKTTLEEKRRLQANGSVGGDAGTSGFRRIVR) the chain is Cytoplasmic. The helical transmembrane segment at 54–74 (LFFACMVAGGIQYGWALQLSL) threads the bilayer. At 75-87 (LSPYSQTLGISHS) the chain is on the extracellular side. The helical transmembrane segment at 88 to 108 (YVSLTWICGPIAGFVVQPIVG) threads the bilayer. Topologically, residues 109-122 (YYSDRCTMKMGRRR) are cytoplasmic. Residues 123–143 (PFILVGCLIICISVMIIGFSA) form a helical membrane-spanning segment. Residues 144 to 163 (DIGRHLGDTKEHCSTYTGPR) lie on the Extracellular side of the membrane. A helical transmembrane segment spans residues 164-184 (WSAAMVYIVGFWFLDFANNTV). The Cytoplasmic segment spans residues 185 to 203 (QGPARAMMADLSAGHHGPN). The chain crosses the membrane as a helical span at residues 204 to 224 (VGQSIFSLWMAIGSVLGYLSG). Residues 225-249 (ANGKWHEWFPWLKTAACCDACANLK) are Extracellular-facing. The helical transmembrane segment at 250 to 270 (GAFFTAVLLIVVSMTVTMYLA) threads the bilayer. Residues 271-302 (DEMPLDKQDVDTSGGGGCAVFVDLFKSLRNLP) lie on the Cytoplasmic side of the membrane. The helical transmembrane segment at 303–323 (PAMFKVLAVTAVTWLSWFPFI) threads the bilayer. Topologically, residues 324–354 (QYNTDWMGREIYHGEPQGTAAKADVYDAGVR) are extracellular. The chain crosses the membrane as a helical span at residues 355–375 (EGAMGLLFCSVALGVTSFVIP). Residues 376–384 (KLCRRLTSK) are Cytoplasmic-facing. Residues 385-405 (VVWSISNFLVFALMAVMVAVG) traverse the membrane as a helical segment. The Extracellular segment spans residues 406–429 (MVSMRGYRPSLAAGLTGPDPTLKA). The helical transmembrane segment at 430–450 (VALVVFALIGIPQAVLFSVPW) threads the bilayer. Residues 451-465 (AVASEVTAEEGGGQG) lie on the Cytoplasmic side of the membrane. Residues 466–486 (LAIGVLNIAIVVPQLVIALTA) traverse the membrane as a helical segment. Residues 487 to 498 (GPIDGAFNKGNT) lie on the Extracellular side of the membrane. The chain crosses the membrane as a helical span at residues 499 to 519 (PAFGIGGAFAFICGVLALIWL). At 520–535 (PKTRGVSNAAVVAGGH) the chain is on the cytoplasmic side.

This sequence belongs to the glycoside-pentoside-hexuronide (GPH) cation symporter transporter (TC 2.A.2.4) family. In terms of assembly, homodimer.

The protein localises to the cell membrane. The protein operates within glycan biosynthesis; sucrose metabolism. Its function is as follows. Responsible for the transport of sucrose into the cell, with the concomitant uptake of protons (symport system). May also transport other glucosides. This chain is Sucrose transport protein SUT5 (SUT5), found in Oryza sativa subsp. indica (Rice).